A 447-amino-acid chain; its full sequence is 2-oxoadipate dioxygenase/decarboxylase (447 aa).

Residues histidine 68, arginine 72, and histidine 224 each coordinate 2-oxoadipate. Histidine 68 contacts Fe(2+). Fe(2+) is bound by residues histidine 224 and glutamate 290. Valine 391 contacts 2-oxoadipate.

The protein belongs to the 2-oxoadipate dioxygenase/decarboxylase family. Fe(2+) is required as a cofactor.

It carries out the reaction 2-oxoadipate + O2 = (R)-2-hydroxyglutarate + CO2. Functionally, catalyzes the decarboxylation and hydroxylation of 2-oxoadipate (2OA) to form D-2-hydroxyglutarate (D-2-HGA). The polypeptide is 2-oxoadipate dioxygenase/decarboxylase (ydcJ) (Escherichia coli (strain K12)).